A 602-amino-acid polypeptide reads, in one-letter code: Alpha-glucosides permease MPH3 (602 aa).

The Cytoplasmic portion of the chain corresponds to 1 to 106 (MKNLSFLINR…AAAWSLLVST (106 aa)). Residues 107 to 127 (TLIMEGYDTAILGAFYALPIF) form a helical membrane-spanning segment. Topologically, residues 128–142 (QRKFGSQNDKTGEWE) are extracellular. Residues 143–163 (ISASWQIGLTLCYMAGEIVGL) form a helical membrane-spanning segment. Topologically, residues 164–178 (QLTGPSVDLVGNRYT) are cytoplasmic. Residues 179 to 199 (LIIALFFLAAFTFILYFCNSL) form a helical membrane-spanning segment. Residue Gly-200 is a topological domain, extracellular. The chain crosses the membrane as a helical span at residues 201–221 (MIAVGQALCGMPWGCFQCLTV). Residues 222–234 (SYASEICPLALRY) lie on the Cytoplasmic side of the membrane. Residues 235-255 (YLTTYSNLCWLFGQLFAAGIM) traverse the membrane as a helical segment. At 256–270 (KNSQKKYADSELGYK) the chain is on the extracellular side. A helical transmembrane segment spans residues 271-291 (LPFALQWILPVPLALGIFFAP). Residues 292–363 (ESPWWLVKKG…EDKINRRRTR (72 aa)) are Cytoplasmic-facing. The chain crosses the membrane as a helical span at residues 364 to 384 (ITCLCWAGQATCGSILIGYST). At 385 to 397 (YFYEKAGVSTEMS) the chain is on the extracellular side. A helical membrane pass occupies residues 398–418 (FTFSIIQYCLGICATFLSWWA). The Cytoplasmic portion of the chain corresponds to 419 to 426 (SKYFGRYD). The helical transmembrane segment at 427–447 (LYAFGLAFQTIVFFIIGGLGC) threads the bilayer. At 448 to 459 (SSTHGSKMGSGS) the chain is on the extracellular side. Residues 460-480 (LLMAVAFFYNLGIAPVVFCLV) form a helical membrane-spanning segment. Over 481–492 (SEMPSSRLRTKT) the chain is Cytoplasmic. The chain crosses the membrane as a helical span at residues 493–513 (IILARNTYNVVSIICSVLILY). The Extracellular segment spans residues 514–525 (QLNSKKWNWGAK). A helical membrane pass occupies residues 526 to 546 (SGFFWGVLCFCTLIWAVVDLP). Residues 547–602 (ETAGKTFVEINELFKLGVSARKFKSTKVDPFVVKTPPKDVSHNDPKGDIEASIAEE) are Cytoplasmic-facing. A compositionally biased stretch (basic and acidic residues) spans 582 to 595 (PPKDVSHNDPKGDI). The interval 582-602 (PPKDVSHNDPKGDIEASIAEE) is disordered.

Belongs to the major facilitator superfamily. Sugar transporter (TC 2.A.1.1) family.

Its subcellular location is the cell membrane. High-affinity uptake of maltose and maltotriose. Also transports alpha-methylglucoside, glucose and turanose but not melezitose or trehalose. The polypeptide is Alpha-glucosides permease MPH3 (MPH3) (Saccharomyces cerevisiae (strain ATCC 204508 / S288c) (Baker's yeast)).